A 188-amino-acid polypeptide reads, in one-letter code: Protein crossbronx-like (188 aa).

Positions 15 to 174 (KQGYHILAEY…ANQVVKLHCG (160 aa)) constitute a UBC core domain.

This sequence belongs to the ubiquitin-conjugating enzyme family. FTS subfamily.

The polypeptide is Protein crossbronx-like (Drosophila simulans (Fruit fly)).